The following is a 257-amino-acid chain: NAD-capped RNA hydrolase NudC (257 aa).

Substrate is bound at residue arginine 69. Zn(2+) contacts are provided by cysteine 98 and cysteine 101. Glutamate 111 serves as a coordination point for substrate. Cysteine 116 and cysteine 119 together coordinate Zn(2+). Residue tyrosine 124 coordinates substrate. One can recognise a Nudix hydrolase domain in the interval 125-248 (PQIAPCIIVA…TVARRLIEDT (124 aa)). A divalent metal cation contacts are provided by alanine 158, glutamate 174, and glutamate 178. The Nudix box motif lies at 159-180 (GFVEVGETLEQAVAREVMEESG). Substrate is bound at residue 192–199 (QPWPFPQS). Glutamate 219 is a binding site for a divalent metal cation. A substrate-binding site is contributed by alanine 241.

Belongs to the Nudix hydrolase family. NudC subfamily. In terms of assembly, homodimer. The cofactor is Mg(2+). Mn(2+) is required as a cofactor. It depends on Zn(2+) as a cofactor.

The enzyme catalyses a 5'-end NAD(+)-phospho-ribonucleoside in mRNA + H2O = a 5'-end phospho-adenosine-phospho-ribonucleoside in mRNA + beta-nicotinamide D-ribonucleotide + 2 H(+). It carries out the reaction NAD(+) + H2O = beta-nicotinamide D-ribonucleotide + AMP + 2 H(+). The catalysed reaction is NADH + H2O = reduced beta-nicotinamide D-ribonucleotide + AMP + 2 H(+). Functionally, mRNA decapping enzyme that specifically removes the nicotinamide adenine dinucleotide (NAD) cap from a subset of mRNAs by hydrolyzing the diphosphate linkage to produce nicotinamide mononucleotide (NMN) and 5' monophosphate mRNA. The NAD-cap is present at the 5'-end of some mRNAs and stabilizes RNA against 5'-processing. Has preference for mRNAs with a 5'-end purine. Catalyzes the hydrolysis of a broad range of dinucleotide pyrophosphates. The sequence is that of NAD-capped RNA hydrolase NudC from Salmonella schwarzengrund (strain CVM19633).